We begin with the raw amino-acid sequence, 154 residues long: MPTTLAVVRLDRDLPLPSRAHDGDAGVDLYSAQDVELAPGQRALVPTGIAVAIPHGMVGLIHPRSGLAARVGLSIVNSPGTVDAGYRGEIKVSLINLDPAAPIAIRRGDRIAQLLVQRVELPELVEVTSFDEAGLADTTRGDGGHGSSGGHASL.

Substrate is bound by residues 64 to 66, asparagine 77, 81 to 83, and lysine 91; these read RSG and TVD. The interval 135–154 is disordered; the sequence is LADTTRGDGGHGSSGGHASL. Positions 144–154 are enriched in gly residues; sequence GHGSSGGHASL.

Belongs to the dUTPase family. Homotrimer. Mg(2+) serves as cofactor.

It catalyses the reaction dUTP + H2O = dUMP + diphosphate + H(+). The protein operates within pyrimidine metabolism; dUMP biosynthesis; dUMP from dCTP (dUTP route): step 2/2. This enzyme is involved in nucleotide metabolism: it produces dUMP, the immediate precursor of thymidine nucleotides and it decreases the intracellular concentration of dUTP so that uracil cannot be incorporated into DNA. The protein is Deoxyuridine 5'-triphosphate nucleotidohydrolase of Mycolicibacterium vanbaalenii (strain DSM 7251 / JCM 13017 / BCRC 16820 / KCTC 9966 / NRRL B-24157 / PYR-1) (Mycobacterium vanbaalenii).